Reading from the N-terminus, the 757-residue chain is Cap-specific mRNA (nucleoside-2'-O-)-methyltransferase 1 (757 aa).

The tract at residues 1 to 61 is disordered; it reads MFQSNQYDEY…EDDEEEEDTP (61 aa). Composition is skewed to acidic residues over residues 18 to 32 and 40 to 59; these read EENE…NENE and GDQD…EEED. The 47-residue stretch at 62-108 folds into the G-patch domain; the sequence is KLSFGAKFLAKHGHIEGQGLGKEKDGRIDLIEVDRFQSTKGLGFAEN. The region spanning 214–438 is the RrmJ-type SAM-dependent 2'-O-MTase domain; it reads IFINRAAVKM…ERYIICKNFL (225 aa). S-adenosyl-L-methionine-binding residues include glycine 257, glutamate 301, and aspartate 352. Residue lysine 392 is the Proton acceptor of the active site. A compositionally biased stretch (basic residues) spans 538–548; it reads HKNRQKHHHNN. The interval 538–670 is disordered; that stretch reads HKNRQKHHHN…NNNNNNNNKN (133 aa). Residues 549 to 569 show a composition bias toward low complexity; the sequence is HSNNNNNNNNSNNNNNNNNQH. Residues 570-581 are compositionally biased toward basic residues; the sequence is QHQHHQHQHHQN. The span at 597 to 668 shows a compositional bias: low complexity; sequence NNNINNNSNN…NNNNNNNNNN (72 aa).

It carries out the reaction a 5'-end (N(7)-methyl 5'-triphosphoguanosine)-ribonucleoside in mRNA + S-adenosyl-L-methionine = a 5'-end (N(7)-methyl 5'-triphosphoguanosine)-(2'-O-methyl-ribonucleoside) in mRNA + S-adenosyl-L-homocysteine + H(+). Its function is as follows. S-adenosyl-L-methionine-dependent methyltransferase that mediates mRNA cap1 2'-O-ribose methylation to the 5'-cap structure of mRNAs. Methylates the ribose of the first nucleotide of a m(7)GpppG-capped mRNA to produce m(7)GpppNmp (cap1). Cap1 modification is linked to higher levels of translation. This chain is Cap-specific mRNA (nucleoside-2'-O-)-methyltransferase 1, found in Dictyostelium discoideum (Social amoeba).